Reading from the N-terminus, the 320-residue chain is Cytochrome f (320 aa).

The N-terminal stretch at 1 to 35 (MENRNTFSWVKEQITRSISVSIMIYVITRTSISNA) is a signal peptide. Heme-binding residues include Y36, C56, C59, and H60. A helical transmembrane segment spans residues 286–305 (VQGLLFFFASVILAQVFLVL).

It belongs to the cytochrome f family. The 4 large subunits of the cytochrome b6-f complex are cytochrome b6, subunit IV (17 kDa polypeptide, petD), cytochrome f and the Rieske protein, while the 4 small subunits are PetG, PetL, PetM and PetN. The complex functions as a dimer. It depends on heme as a cofactor.

It is found in the plastid. It localises to the chloroplast thylakoid membrane. In terms of biological role, component of the cytochrome b6-f complex, which mediates electron transfer between photosystem II (PSII) and photosystem I (PSI), cyclic electron flow around PSI, and state transitions. The sequence is that of Cytochrome f (petA) from Triticum aestivum (Wheat).